The chain runs to 273 residues: MFKHTKMLQHPAKPDRPDPLFAKKMQEILGGQFGEISVAMQYLFQGWNTRGNEKYKDLLMDTATEELGHVEMIATMIARLLEDAPLDQQEKAAEDPVIGSILGGMNPHHAIVSGLGAMPESSTGVPWSGGYIVASGNLLADFRANLNAESQGRLQVARLFEMTDDKGVKDMLSFLLARDTMHQNQWLAAIKELEAQEGPVVPGTFPKALEKQEFSHQLINFSEGEESAKQNWLNEKAPDGEAFEYVKEAKTFGEKPELKPAPPCVHNTLPGRE.

Residue glutamate 35 coordinates Mn(2+). The Ca(2+) site is built by aspartate 57 and aspartate 61. 4 residues coordinate Mn(2+): glutamate 66, histidine 69, glutamate 149, and histidine 182. Asparagine 220, serine 222, and glycine 224 together coordinate Ca(2+). The disordered stretch occupies residues 254–273; it reads EKPELKPAPPCVHNTLPGRE.

It belongs to the manganese catalase family. As to quaternary structure, homohexamer. Requires Ca(2+) as cofactor. The cofactor is Mn(2+).

The catalysed reaction is 2 H2O2 = O2 + 2 H2O. Its activity is regulated as follows. Inhibited in the presence of EDTA. Resistant to inhibition by sodium azide. Its function is as follows. Catalyzes the decomposition of hydrogen peroxide into water and oxygen. No significant activity could be detected with any of the other tested substrates, including glutathione, pyrogallol, NADH, NADPH and o-dianisidine. The chain is Manganese catalase from Bacillus subtilis.